We begin with the raw amino-acid sequence, 622 residues long: Pyranose 2-oxidase (622 aa).

The signal sequence occupies residues methionine 1 to histidine 28. Positions serine 29–glycine 37 are excised as a propeptide. Histidine 167 carries the post-translational modification Tele-8alpha-FAD histidine. Positions 449 and 451 each coordinate substrate. Catalysis depends on histidine 546, which acts as the Proton acceptor. The active site involves asparagine 591.

This sequence belongs to the GMC oxidoreductase family. Homotetramer. FAD is required as a cofactor.

The protein resides in the periplasm. The enzyme catalyses D-glucose + O2 = 2-dehydro-D-glucose + H2O2. Catalyzes the oxidation of various aldopyranoses and disaccharides on carbon-2 to the corresponding 2-keto sugars concomitant with the reduction of O(2) to H(2)O(2). Plays an important role in lignin degradation of wood rot fungi by supplying the essential cosubstrate H(2)O(2) for the ligninolytic peroxidases, lignin peroxidase and manganese-dependent peroxidase. The preferred substrate is D-glucose which is converted to 2-dehydro-D-glucose, an intermediate of a secondary metabolic pathway leading to the antibiotic cortalcerone. Also acts on D-xylose, together with D-glucose the major sugars derived from wood, on L-sorbose, D-galactose and 1,5-anhydroglucitol, a diagnostic marker of diabetes mellitus. This is Pyranose 2-oxidase (P2OX) from Trametes hirsuta (White-rot fungus).